Reading from the N-terminus, the 206-residue chain is Inner membrane-spanning protein YciB (206 aa).

5 consecutive transmembrane segments (helical) span residues 50-70, 78-98, 105-125, 150-170, and 173-193; these read PILLATAIAIIATILQIGYLL, GTLWLSLAIIVFFGGATIYFH, WKPTVLYWCFAAALLFSQIFL, LSWVAFFITMGLLNLYVAFNF, and AAWVNFKLFGGMGLMFAFIII.

Belongs to the YciB family.

It localises to the cell inner membrane. In terms of biological role, plays a role in cell envelope biogenesis, maintenance of cell envelope integrity and membrane homeostasis. The protein is Inner membrane-spanning protein YciB of Herminiimonas arsenicoxydans.